The sequence spans 304 residues: Glutaminase (304 aa).

Substrate contacts are provided by Ser63, Asn113, Glu157, Asn164, Tyr188, Tyr240, and Val258.

It belongs to the glutaminase family. Homotetramer.

The catalysed reaction is L-glutamine + H2O = L-glutamate + NH4(+). The chain is Glutaminase from Ralstonia nicotianae (strain ATCC BAA-1114 / GMI1000) (Ralstonia solanacearum).